Reading from the N-terminus, the 240-residue chain is Phosphoribosylaminoimidazole-succinocarboxamide synthase (240 aa).

It belongs to the SAICAR synthetase family.

The catalysed reaction is 5-amino-1-(5-phospho-D-ribosyl)imidazole-4-carboxylate + L-aspartate + ATP = (2S)-2-[5-amino-1-(5-phospho-beta-D-ribosyl)imidazole-4-carboxamido]succinate + ADP + phosphate + 2 H(+). It functions in the pathway purine metabolism; IMP biosynthesis via de novo pathway; 5-amino-1-(5-phospho-D-ribosyl)imidazole-4-carboxamide from 5-amino-1-(5-phospho-D-ribosyl)imidazole-4-carboxylate: step 1/2. The protein is Phosphoribosylaminoimidazole-succinocarboxamide synthase of Neorickettsia sennetsu (strain ATCC VR-367 / Miyayama) (Ehrlichia sennetsu).